The chain runs to 409 residues: Tyrosine--tRNA ligase (409 aa).

Tyrosine 39 contributes to the L-tyrosine binding site. The short motif at 44-53 (PTAPSLHVGS) is the 'HIGH' region element. L-tyrosine contacts are provided by tyrosine 176 and glutamine 180. A 'KMSKS' region motif is present at residues 236-240 (KMGKT). Lysine 239 contributes to the ATP binding site. Residues 346–409 (IGIVDALVGL…KKKHGILRKA (64 aa)) enclose the S4 RNA-binding domain.

Belongs to the class-I aminoacyl-tRNA synthetase family. TyrS type 1 subfamily. In terms of assembly, homodimer.

The protein localises to the cytoplasm. The catalysed reaction is tRNA(Tyr) + L-tyrosine + ATP = L-tyrosyl-tRNA(Tyr) + AMP + diphosphate + H(+). Catalyzes the attachment of tyrosine to tRNA(Tyr) in a two-step reaction: tyrosine is first activated by ATP to form Tyr-AMP and then transferred to the acceptor end of tRNA(Tyr). In Novosphingobium aromaticivorans (strain ATCC 700278 / DSM 12444 / CCUG 56034 / CIP 105152 / NBRC 16084 / F199), this protein is Tyrosine--tRNA ligase.